Consider the following 527-residue polypeptide: Cytochrome P450 monooxygenase aba2 (527 aa).

The chain crosses the membrane as a helical span at residues 26–46 (TTVAVLVTVALIAQVLWKIFF). N-linked (GlcNAc...) asparagine glycosylation is found at asparagine 189, asparagine 420, and asparagine 448. Position 460 (cysteine 460) interacts with heme. Asparagine 464 carries an N-linked (GlcNAc...) asparagine glycan.

Belongs to the cytochrome P450 family. Requires heme as cofactor.

The protein localises to the membrane. The protein operates within hormone biosynthesis. In terms of biological role, cytochrome P450 monooxygenase; part of the gene cluster that mediates the biosynthesis of abscisic acid (ABA), a phytohormone that acts antagonistically toward salicylic acid (SA), jasmonic acid (JA) and ethylene (ETH) signaling, to impede plant defense responses. The first step of the pathway catalyzes the reaction from farnesyl diphosphate to alpha-ionylideneethane performed by the alpha-ionylideneethane synthase aba3 via a three-step reaction mechanism involving 2 neutral intermediates, beta-farnesene and allofarnesene. The cytochrome P450 monooxygenase aba1 might then be involved in the conversion of alpha-ionylideneethane to alpha-ionylideneacetic acid. Alpha-ionylideneacetic acid is further converted to abscisic acid in 2 steps involving the cytochrome P450 monooxygenase aba2 and the short-chain dehydrogenase/reductase aba4, via the intermediates 1'-deoxy-ABA or 1',4'-trans-diol-ABA, depending on the order of action of these 2 enzymes. Aba2 is responsible for the hydroxylation of carbon atom C-1' and aba4 might be involved in the oxidation of the C-4' carbon atom. This is Cytochrome P450 monooxygenase aba2 (aba2) from Botryotinia fuckeliana (strain B05.10) (Noble rot fungus).